A 234-amino-acid polypeptide reads, in one-letter code: Adenosine 5'-phosphosulfate reductase (234 aa).

4 residues coordinate [4Fe-4S] cluster: Cys-120, Cys-121, Cys-203, and Cys-206. Cys-229 serves as the catalytic Nucleophile; cysteine thiosulfonate intermediate.

This sequence belongs to the PAPS reductase family. CysH subfamily. The cofactor is [4Fe-4S] cluster.

It localises to the cytoplasm. The catalysed reaction is [thioredoxin]-disulfide + sulfite + AMP + 2 H(+) = adenosine 5'-phosphosulfate + [thioredoxin]-dithiol. It participates in sulfur metabolism; hydrogen sulfide biosynthesis; sulfite from sulfate. Catalyzes the formation of sulfite from adenosine 5'-phosphosulfate (APS) using thioredoxin as an electron donor. This Bacillus cereus (strain AH187) protein is Adenosine 5'-phosphosulfate reductase.